We begin with the raw amino-acid sequence, 120 residues long: uncharacterized protein (120 aa).

The next 2 membrane-spanning stretches (helical) occupy residues 8–28 and 55–75; these read PFVT…CTLV and FLEN…IGIL.

It is found in the membrane. This is an uncharacterized protein from Saccharomyces cerevisiae (strain ATCC 204508 / S288c) (Baker's yeast).